A 197-amino-acid chain; its full sequence is NAD(P)H-quinone oxidoreductase subunit 6, chloroplastic (197 aa).

5 helical membrane passes run 10–30 (FVLA…VLLV), 39–59 (LGLV…DFVA), 60–80 (AAQL…AVMI), 94–114 (IGYI…SFVI), and 147–167 (LLGE…AALV).

The protein belongs to the complex I subunit 6 family. In terms of assembly, NDH is composed of at least 16 different subunits, 5 of which are encoded in the nucleus.

The protein resides in the plastid. The protein localises to the chloroplast thylakoid membrane. It catalyses the reaction a plastoquinone + NADH + (n+1) H(+)(in) = a plastoquinol + NAD(+) + n H(+)(out). The enzyme catalyses a plastoquinone + NADPH + (n+1) H(+)(in) = a plastoquinol + NADP(+) + n H(+)(out). Functionally, NDH shuttles electrons from NAD(P)H:plastoquinone, via FMN and iron-sulfur (Fe-S) centers, to quinones in the photosynthetic chain and possibly in a chloroplast respiratory chain. The immediate electron acceptor for the enzyme in this species is believed to be plastoquinone. Couples the redox reaction to proton translocation, and thus conserves the redox energy in a proton gradient. The chain is NAD(P)H-quinone oxidoreductase subunit 6, chloroplastic (ndhG) from Adiantum capillus-veneris (Maidenhair fern).